Consider the following 338-residue polypeptide: LIX1-like protein (338 aa).

Positions 1–65 (METMRAQRLQ…LLLAGAPGLP (65 aa)) are disordered. Residues 29-38 (TGAPTSAATP) are compositionally biased toward low complexity. Over residues 39–56 (PAGPPPAPPPPAPPPPPL) the composition is skewed to pro residues.

It belongs to the LIX1 family.

The polypeptide is LIX1-like protein (Lix1l) (Rattus norvegicus (Rat)).